A 227-amino-acid chain; its full sequence is Cytochrome c oxidase subunit 2 (227 aa).

Residues 1-14 (MAYPFQLGLQDATS) lie on the Mitochondrial intermembrane side of the membrane. Residues 15–45 (PIMEELLHFHDHTLMIVFLISSLVLYIISLM) form a helical membrane-spanning segment. Topologically, residues 46 to 59 (LTTKLTHTSTMDAQ) are mitochondrial matrix. A helical membrane pass occupies residues 60–87 (EVETVWTILPAIILILIALPSLRILYMM). Residues 88-227 (DEINNPSLTV…YFEAWSALMV (140 aa)) are Mitochondrial intermembrane-facing. Cu cation contacts are provided by His161, Cys196, Glu198, Cys200, His204, and Met207. Residue Glu198 coordinates Mg(2+). Tyr218 bears the Phosphotyrosine mark.

This sequence belongs to the cytochrome c oxidase subunit 2 family. Component of the cytochrome c oxidase (complex IV, CIV), a multisubunit enzyme composed of 14 subunits. The complex is composed of a catalytic core of 3 subunits MT-CO1, MT-CO2 and MT-CO3, encoded in the mitochondrial DNA, and 11 supernumerary subunits COX4I, COX5A, COX5B, COX6A, COX6B, COX6C, COX7A, COX7B, COX7C, COX8 and NDUFA4, which are encoded in the nuclear genome. The complex exists as a monomer or a dimer and forms supercomplexes (SCs) in the inner mitochondrial membrane with NADH-ubiquinone oxidoreductase (complex I, CI) and ubiquinol-cytochrome c oxidoreductase (cytochrome b-c1 complex, complex III, CIII), resulting in different assemblies (supercomplex SCI(1)III(2)IV(1) and megacomplex MCI(2)III(2)IV(2)). Found in a complex with TMEM177, COA6, COX18, COX20, SCO1 and SCO2. Interacts with TMEM177 in a COX20-dependent manner. Interacts with COX20. Interacts with COX16. The cofactor is Cu cation.

The protein localises to the mitochondrion inner membrane. It catalyses the reaction 4 Fe(II)-[cytochrome c] + O2 + 8 H(+)(in) = 4 Fe(III)-[cytochrome c] + 2 H2O + 4 H(+)(out). In terms of biological role, component of the cytochrome c oxidase, the last enzyme in the mitochondrial electron transport chain which drives oxidative phosphorylation. The respiratory chain contains 3 multisubunit complexes succinate dehydrogenase (complex II, CII), ubiquinol-cytochrome c oxidoreductase (cytochrome b-c1 complex, complex III, CIII) and cytochrome c oxidase (complex IV, CIV), that cooperate to transfer electrons derived from NADH and succinate to molecular oxygen, creating an electrochemical gradient over the inner membrane that drives transmembrane transport and the ATP synthase. Cytochrome c oxidase is the component of the respiratory chain that catalyzes the reduction of oxygen to water. Electrons originating from reduced cytochrome c in the intermembrane space (IMS) are transferred via the dinuclear copper A center (CU(A)) of subunit 2 and heme A of subunit 1 to the active site in subunit 1, a binuclear center (BNC) formed by heme A3 and copper B (CU(B)). The BNC reduces molecular oxygen to 2 water molecules using 4 electrons from cytochrome c in the IMS and 4 protons from the mitochondrial matrix. The sequence is that of Cytochrome c oxidase subunit 2 (MT-CO2) from Cuon alpinus (Dhole).